The following is a 120-amino-acid chain: C-C motif chemokine 23 (120 aa).

An N-terminal signal peptide occupies residues 1-21 (MKVSVAALSCLMLVTALGSQA). 3 cysteine pairs are disulfide-bonded: Cys54-Cys78, Cys55-Cys94, and Cys65-Cys105.

This sequence belongs to the intercrine beta (chemokine CC) family.

It is found in the secreted. Shows chemotactic activity for monocytes, resting T-lymphocytes, and neutrophils, but not for activated lymphocytes. Inhibits proliferation of myeloid progenitor cells in colony formation assays. This protein can bind heparin. Binds CCR1. The protein is C-C motif chemokine 23 (CCL23) of Macaca mulatta (Rhesus macaque).